The following is a 502-amino-acid chain: Probable cytochrome P450 6a23 (502 aa).

Cys445 provides a ligand contact to heme.

The protein belongs to the cytochrome P450 family. It depends on heme as a cofactor.

The protein resides in the endoplasmic reticulum membrane. The protein localises to the microsome membrane. Its function is as follows. May be involved in the metabolism of insect hormones and in the breakdown of synthetic insecticides. This chain is Probable cytochrome P450 6a23 (Cyp6a23), found in Drosophila melanogaster (Fruit fly).